A 370-amino-acid chain; its full sequence is Protein DVU_0535 (370 aa).

Residues 1-258 (MDRRRFLTLL…EELGTKSAPE (258 aa)) lie on the Cytoplasmic side of the membrane. 4Fe-4S ferredoxin-type domains lie at 40-70 (YGVLHDTTRCIGCRKCEQACNEVNKLPAPKA), 101-132 (DHPVFRKQQCNHCLEPACASACFVKAFTKNPD), and 133-162 (GSVTYDGSLCVGCRYCMVACPFNVPAFQYA). [4Fe-4S] cluster is bound by residues cysteine 49, cysteine 52, cysteine 55, cysteine 59, cysteine 110, cysteine 113, cysteine 118, cysteine 122, cysteine 142, cysteine 145, cysteine 148, cysteine 152, cysteine 172, cysteine 175, cysteine 187, and cysteine 191. Residues 259-284 (YTAGALGAVPMVVGIWPILLTGAYAI) traverse the membrane as a helical segment. Topologically, residues 285 to 370 (TKRKEKIAAE…DDAGKPGEDA (86 aa)) are periplasmic. The segment covering 345–355 (FEEELAAKEQP) has biased composition (basic and acidic residues). Positions 345-370 (FEEELAAKEQPEAPEGDDAGKPGEDA) are disordered.

Its subcellular location is the cell membrane. Functionally, HMWC (high-molecular-weight cytochrome c precursor), ORF2, ORF3, ORF4, ORF5, ORF6 in the HMC operon form a transmembrane protein complex that allows electron flow from the periplasmic hydrogenase to the cytoplasmic enzymes that catalyze reduction of sulfates. ORF2 is a transmembrane redox protein. This Nitratidesulfovibrio vulgaris (strain ATCC 29579 / DSM 644 / CCUG 34227 / NCIMB 8303 / VKM B-1760 / Hildenborough) (Desulfovibrio vulgaris) protein is Protein DVU_0535.